Here is a 446-residue protein sequence, read N- to C-terminus: Transcription factor Sox-10 (446 aa).

Disordered stretches follow at residues 1–60 (MSDD…SEDE), 153–191 (RLRM…AEGG), and 203–264 (HLDH…IDFG). The span at 36–48 (DDDDDDDEEEEEE) shows a compositional bias: acidic residues. A Glycyl lysine isopeptide (Lys-Gly) (interchain with G-Cter in SUMO) cross-link involves residue lysine 52. The segment at 56-96 (DSEDERFPVCIREAVSQVLNGYDWTLVPMPVRVNGGSKSKP) is dimerization (DIM). A DNA-binding region (HMG box) is located at residues 98–166 (VKRPMNAFMV…QHKKDHPDYK (69 aa)). Basic and acidic residues predominate over residues 153 to 167 (RLRMQHKKDHPDYKY). Residues 213–226 (SDGNSEHSTGQSHG) show a composition bias toward polar residues. The tract at residues 217–303 (SEHSTGQSHG…NGHAGHPSHI (87 aa)) is transactivation domain (TAM). Basic and acidic residues predominate over residues 243–257 (SDGKRDGSHALREGG). The segment at 337–446 (KAQVKTESSS…QPVYTTLSRP (110 aa)) is transactivation domain (TAC). Lysine 341 participates in a covalent cross-link: Glycyl lysine isopeptide (Lys-Gly) (interchain with G-Cter in SUMO). The tract at residues 421 to 446 (SDPPSVAQSHSPTHWEQPVYTTLSRP) is disordered. Residues 426 to 446 (VAQSHSPTHWEQPVYTTLSRP) are compositionally biased toward polar residues.

In terms of assembly, interacts with the sumoylation factors ube2i/ubc9 and sumo1. Sumoylated. In terms of tissue distribution, first expressed at stages 13/14 at the lateral edges of the neural plate, in the neural crest forming region. By stage 22, neural crest cells migrate in the cranial region and strong expression is seen in the crest cells that populate the branchial arches as well as those migrating in the frontonasal region. Also strongly expressed in the trunk neural crest. Expression in the otic vesicle begins around stage 25 and persists until at least stage 40. At stage 30, expression is down-regulated in the cranial neural crest of the pharyngeal arches but persists in the trunk neural crest, in the otic vesicle and in discrete domains adjacent to the hindbrain. At stage 40, expression is restricted to the otic vesicle, differentiated pigment cells, and in several cranial ganglia.

The protein localises to the cytoplasm. It is found in the nucleus. Its function is as follows. Acts early in neural crest formation, functioning redundantly with the other group E Sox factors sox8 and sox9 to induce neural crest progenitors. Acts downstream of wnt-signaling at the neural plate border. Involved in the specification of neural crest progenitors fated to form the pigment cell lineage. This is Transcription factor Sox-10 (sox10) from Xenopus laevis (African clawed frog).